The primary structure comprises 456 residues: Trigger factor (456 aa).

Residues 166–245 form the PPIase FKBP-type domain; that stretch reads GDYANIDLNA…VNSVKAEELP (80 aa).

This sequence belongs to the FKBP-type PPIase family. Tig subfamily.

The protein resides in the cytoplasm. The enzyme catalyses [protein]-peptidylproline (omega=180) = [protein]-peptidylproline (omega=0). In terms of biological role, involved in protein export. Acts as a chaperone by maintaining the newly synthesized protein in an open conformation. Functions as a peptidyl-prolyl cis-trans isomerase. This chain is Trigger factor, found in Bifidobacterium adolescentis (strain ATCC 15703 / DSM 20083 / NCTC 11814 / E194a).